Reading from the N-terminus, the 111-residue chain is MFTRRFAASMVGTTLTAATLGLAALGFAGTASASSTDEAFLAQLQADGITPPSAARAIKDAHAVCDALDEGHSAKAVIKAVAKATGLSAKGAKTFAVDAASAYCPQYVTSS.

To M.tuberculosis Rv1271c.

This is an uncharacterized protein from Mycobacterium bovis (strain ATCC BAA-935 / AF2122/97).